The following is a 104-amino-acid chain: MSEKQKIRIRLKAFDHRLIDRWASEIVETAKRTGAQVRGPIPLPTKIERYTILVSPHADKDARDQYETRTHKRVLDIVDPNDKTVDALMKLELAAGVDVQIKLT.

Belongs to the universal ribosomal protein uS10 family. Part of the 30S ribosomal subunit.

Involved in the binding of tRNA to the ribosomes. This is Small ribosomal subunit protein uS10 from Xanthomonas oryzae pv. oryzae (strain MAFF 311018).